The sequence spans 412 residues: MNLPTLWTWILPPIAGAIIGYFTNDVAIKMLFRPYKAIYIGKRPLPFTPGLIPRNQDRLAVRVSDTIMGSLLTPEELQKLAKRLLDTERVQGAILWLLQLALKQIKGDRQAKTAEILAAILHDLFGESLARLLKVLARRQDFLEKQINQIFDRLVLEFSLSEQQARQFSDWLLETVLPADVIRLALIDFLTDRNIQVIDEGFREKTSGTYWVVANLFGLRNALARLRTFCLDEKDLANTRIKELLLSLEMRNRLKNWLQSISLQNLPISTVRQLRKTTRDTVRIYIQESGEQFLQDFGQTIDWDQIANLIINRLQSSVSMTTSLGVISQELALILERYLEEDLEKLVAQIIPILNIDQVIRDRVNATSPADLENAIQGIVKQELQGIVNLGGILGLLVGLMQTIILIAQNPG.

Transmembrane regions (helical) follow at residues 3–23 and 387–407; these read LPTL…GYFT and IVNL…IILI.

It belongs to the UPF0754 family.

It is found in the cell inner membrane. The chain is UPF0754 membrane protein MAE_37850 from Microcystis aeruginosa (strain NIES-843 / IAM M-2473).